Reading from the N-terminus, the 378-residue chain is Dual-specificity RNA methyltransferase RlmN (378 aa).

Glu95 acts as the Proton acceptor in catalysis. The Radical SAM core domain occupies 101–345; it reads EETRGTLCVS…TTIRKTRGDD (245 aa). An intrachain disulfide couples Cys108 to Cys350. [4Fe-4S] cluster is bound by residues Cys115, Cys119, and Cys122. S-adenosyl-L-methionine-binding positions include 176 to 177, Ser208, 230 to 232, and Asn307; these read GE and SLH. Residue Cys350 is the S-methylcysteine intermediate of the active site.

It belongs to the radical SAM superfamily. RlmN family. Requires [4Fe-4S] cluster as cofactor.

It localises to the cytoplasm. The enzyme catalyses adenosine(2503) in 23S rRNA + 2 reduced [2Fe-2S]-[ferredoxin] + 2 S-adenosyl-L-methionine = 2-methyladenosine(2503) in 23S rRNA + 5'-deoxyadenosine + L-methionine + 2 oxidized [2Fe-2S]-[ferredoxin] + S-adenosyl-L-homocysteine. It catalyses the reaction adenosine(37) in tRNA + 2 reduced [2Fe-2S]-[ferredoxin] + 2 S-adenosyl-L-methionine = 2-methyladenosine(37) in tRNA + 5'-deoxyadenosine + L-methionine + 2 oxidized [2Fe-2S]-[ferredoxin] + S-adenosyl-L-homocysteine. Its function is as follows. Specifically methylates position 2 of adenine 2503 in 23S rRNA and position 2 of adenine 37 in tRNAs. m2A2503 modification seems to play a crucial role in the proofreading step occurring at the peptidyl transferase center and thus would serve to optimize ribosomal fidelity. The protein is Dual-specificity RNA methyltransferase RlmN of Burkholderia pseudomallei (strain K96243).